A 469-amino-acid chain; its full sequence is Fe(3+)-Zn(2+) purple acid phosphatase 12 (469 aa).

The signal sequence occupies residues 1 to 28 (MSSRSDLKIKRVSLIIFLLSVLVEFCYG). An N-linked (GlcNAc...) asparagine glycan is attached at N114. Residue D168 coordinates Fe cation. N-linked (GlcNAc...) asparagine glycosylation occurs at N176. Fe cation is bound by residues D197 and Y200. D197 is a binding site for Zn(2+). Position 234 (N234) interacts with Zn(2+). N234 is a binding site for substrate. N-linked (GlcNAc...) asparagine glycosylation is present at N307. H319 serves as a coordination point for Zn(2+). H329 (proton donor) is an active-site residue. H356 serves as a coordination point for Zn(2+). Substrate is bound at residue 356–358 (HVH). A Fe cation-binding site is contributed by H358. Residue N429 is glycosylated (N-linked (GlcNAc...) asparagine).

The protein belongs to the metallophosphoesterase superfamily. Purple acid phosphatase family. Homodimer; disulfide-linked. Fe cation serves as cofactor. The cofactor is Zn(2+). Expressed in roots, stems, leaves, flowers and siliques.

It is found in the secreted. The catalysed reaction is a phosphate monoester + H2O = an alcohol + phosphate. This is Fe(3+)-Zn(2+) purple acid phosphatase 12 (PAP12) from Arabidopsis thaliana (Mouse-ear cress).